Reading from the N-terminus, the 366-residue chain is Anhydro-N-acetylmuramic acid kinase (366 aa).

Position 10-17 (10-17 (GTSMDGID)) interacts with ATP.

This sequence belongs to the anhydro-N-acetylmuramic acid kinase family.

It carries out the reaction 1,6-anhydro-N-acetyl-beta-muramate + ATP + H2O = N-acetyl-D-muramate 6-phosphate + ADP + H(+). It functions in the pathway amino-sugar metabolism; 1,6-anhydro-N-acetylmuramate degradation. It participates in cell wall biogenesis; peptidoglycan recycling. Its function is as follows. Catalyzes the specific phosphorylation of 1,6-anhydro-N-acetylmuramic acid (anhMurNAc) with the simultaneous cleavage of the 1,6-anhydro ring, generating MurNAc-6-P. Is required for the utilization of anhMurNAc either imported from the medium or derived from its own cell wall murein, and thus plays a role in cell wall recycling. The sequence is that of Anhydro-N-acetylmuramic acid kinase from Legionella pneumophila (strain Corby).